The following is a 264-amino-acid chain: Late embryogenesis abundant protein D-34 (264 aa).

Over residues M1–G16 the composition is skewed to low complexity. The segment at M1–K23 is disordered. SMP domains follow at residues I22 to Q76, I138 to A194, and I203 to N261.

Belongs to the LEA type SMP family.

LEA proteins are late embryonic proteins abundant in higher plant seed embryos. There are two subsets of LEA proteins (5a and 5b), the first ones are expressed when the cotyledon weight reach 80 mg and the second set are expressed above 100 mg. The function of those proteins is not known. The chain is Late embryogenesis abundant protein D-34 from Gossypium hirsutum (Upland cotton).